The primary structure comprises 244 residues: 1-(5-phosphoribosyl)-5-[(5-phosphoribosylamino)methylideneamino] imidazole-4-carboxamide isomerase (244 aa).

Aspartate 10 functions as the Proton acceptor in the catalytic mechanism. Aspartate 132 serves as the catalytic Proton donor.

The protein belongs to the HisA/HisF family.

It localises to the cytoplasm. The catalysed reaction is 1-(5-phospho-beta-D-ribosyl)-5-[(5-phospho-beta-D-ribosylamino)methylideneamino]imidazole-4-carboxamide = 5-[(5-phospho-1-deoxy-D-ribulos-1-ylimino)methylamino]-1-(5-phospho-beta-D-ribosyl)imidazole-4-carboxamide. It functions in the pathway amino-acid biosynthesis; L-histidine biosynthesis; L-histidine from 5-phospho-alpha-D-ribose 1-diphosphate: step 4/9. The polypeptide is 1-(5-phosphoribosyl)-5-[(5-phosphoribosylamino)methylideneamino] imidazole-4-carboxamide isomerase (Xanthomonas euvesicatoria pv. vesicatoria (strain 85-10) (Xanthomonas campestris pv. vesicatoria)).